Here is a 650-residue protein sequence, read N- to C-terminus: MSSQSLYKVSGNIAANALVNNDKYKTMYQESIVNPEGFWREHGKRIDWIKPYTKIKKTSFDDHNLSINWFYDGTLNASANCLDRHLAEHSDRVAIIWEGDNASEQRKITYGELHAEVCKFANALRSQGVRRGDIVTIYMPMVPEAAVAMLACARIGAVHSVVFGGFSPDSIASRVIDGKSKVIITSDEGMRGGRAIPLKRNIDDALKNPDVTTVEKVIVLKRTGGIVDWVEDRDVWWHSLMETASEYCQPEEMDAEAPLFLLYTSGSTGNPKGVLHTTGGYMVYASMTHEYVFDYKAGEVYWCTADVGWITGHSYMVYGPLANGATVLIHEGVPNHPSPARLGEMIDRHKVSILYTAPTLIRALMAEGKQHFDKFDGSSLRIMGSVGEPINPEAWRWYHEVIGHEHCPIVDTWWQTETGGILITPLPGATDTKPGSATRPFFGVQPALVDNMGNILEGENEGNLVLLDSWPGQMRTVYGDHERFVLTYFKTFRGMYFTGDGARRDEDGYYWITGRVDDVINVSGHRLGTAEVESALVSHELVAEAAVVGYPHDIKGQGIYAYVTLTRGTEETEELRQELRQWVRKEIGALATPDLIQWATGLPKTRSGKIMRRFLRKIAANEVTNLGDASTLADPAVIETLIESRLNRTE.

CoA contacts are provided by residues 191–194 (RGGR), threonine 311, and asparagine 335. Residues 387–389 (GEP), 411–416 (DTWWQT), aspartate 500, and arginine 515 contribute to the ATP site. Serine 523 is a CoA binding site. An ATP-binding site is contributed by arginine 526. Residues valine 537, histidine 539, and valine 542 each contribute to the Mg(2+) site. Arginine 584 contacts CoA. Lysine 609 carries the post-translational modification N6-acetyllysine.

This sequence belongs to the ATP-dependent AMP-binding enzyme family. Mg(2+) is required as a cofactor. Acetylated. Deacetylation by the SIR2-homolog deacetylase activates the enzyme.

It carries out the reaction acetate + ATP + CoA = acetyl-CoA + AMP + diphosphate. Its function is as follows. Catalyzes the conversion of acetate into acetyl-CoA (AcCoA), an essential intermediate at the junction of anabolic and catabolic pathways. AcsA undergoes a two-step reaction. In the first half reaction, AcsA combines acetate with ATP to form acetyl-adenylate (AcAMP) intermediate. In the second half reaction, it can then transfer the acetyl group from AcAMP to the sulfhydryl group of CoA, forming the product AcCoA. This chain is Acetyl-coenzyme A synthetase, found in Shewanella baltica (strain OS195).